The following is a 380-amino-acid chain: Cytochrome b (380 aa).

4 consecutive transmembrane segments (helical) span residues 34 to 54, 78 to 99, 114 to 134, and 179 to 199; these read FGSL…LLAM, WLIR…YMHI, WNTG…GYVL, and FFAL…IHLT. Positions 84 and 98 each coordinate heme b. His183 and His197 together coordinate heme b. Position 202 (His202) interacts with a ubiquinone. A run of 4 helical transmembrane segments spans residues 227 to 247, 289 to 309, 321 to 341, and 348 to 368; these read LKDI…ALFS, LGGV…PLLH, LSQL…WIGS, and FIII…ILFP.

This sequence belongs to the cytochrome b family. In terms of assembly, the cytochrome bc1 complex contains 11 subunits: 3 respiratory subunits (MT-CYB, CYC1 and UQCRFS1), 2 core proteins (UQCRC1 and UQCRC2) and 6 low-molecular weight proteins (UQCRH/QCR6, UQCRB/QCR7, UQCRQ/QCR8, UQCR10/QCR9, UQCR11/QCR10 and a cleavage product of UQCRFS1). This cytochrome bc1 complex then forms a dimer. It depends on heme b as a cofactor.

It localises to the mitochondrion inner membrane. Component of the ubiquinol-cytochrome c reductase complex (complex III or cytochrome b-c1 complex) that is part of the mitochondrial respiratory chain. The b-c1 complex mediates electron transfer from ubiquinol to cytochrome c. Contributes to the generation of a proton gradient across the mitochondrial membrane that is then used for ATP synthesis. The polypeptide is Cytochrome b (MT-CYB) (Hydrobates pelagicus (European storm-petrel)).